Here is a 1279-residue protein sequence, read N- to C-terminus: Sterol regulatory element-binding protein cleavage-activating protein (1279 aa).

The Cytoplasmic portion of the chain corresponds to 1–18 (MTLTERLREKISRAFYNH). The chain crosses the membrane as a helical span at residues 19 to 39 (GLLCASYPIPIILFTGFCILA). Over 40–279 (CCYPLLKLPL…SLVHVHFKEE (240 aa)) the chain is Lumenal. The interval 46–284 (KLPLPGTGPV…HFKEEIGVAE (239 aa)) is loop-1. Residues 60–80 (PVKDYSPPPVDSDRKQGEPTE) are disordered. Asparagine 263 carries an N-linked (GlcNAc...) asparagine glycan. Residues 280 to 300 (IGVAELIPLVTTYIILFAYIY) traverse the membrane as a helical segment. The SSD domain occupies 284–442 (ELIPLVTTYI…MLFFTTVLSI (159 aa)). Topologically, residues 301 to 312 (FSTRKIDMVKSK) are cytoplasmic. Residues 313 to 333 (WGLALAAVVTVLSSLLMSVGL) form a helical membrane-spanning segment. Topologically, residues 334-344 (CTLFGLTPTLN) are lumenal. Residues 345–365 (GGEIFPYLVVVIGLENVLVLT) traverse the membrane as a helical segment. Residues 366-401 (KSVVSTPVDLEVKLRIAQGLSSESWSIMKNMATELG) are Cytoplasmic-facing. The chain crosses the membrane as a helical span at residues 402-422 (IILIGYFTLVPAIQEFCLFAV). Residue valine 423 is a topological domain, lumenal. A helical transmembrane segment spans residues 424-444 (GLVSDFFLQMLFFTTVLSIDI). Residues 445-518 (RRMELADLNK…FLARTRLAQR (74 aa)) are Cytoplasmic-facing. The ER export signal signature appears at 447-452 (MELADL). Glycyl lysine isopeptide (Lys-Gly) (interchain with G-Cter in ubiquitin) cross-links involve residues lysine 454 and lysine 466. The helical transmembrane segment at 519–539 (LIMAGTVVWIGILVYTDPAGL) threads the bilayer. The interval 535-710 (DPAGLRNYLA…QAHGDVTLYK (176 aa)) is loop-7. The Lumenal segment spans residues 540–709 (RNYLAAQVTE…VQAHGDVTLY (170 aa)). A disordered region spans residues 579–615 (IFPPDAPKLPENQTSPGESPERGGPAEVVHDSPVPEV). Residues asparagine 590 and asparagine 641 are each glycosylated (N-linked (GlcNAc...) asparagine). A disordered region spans residues 668 to 696 (EGRHPQDGRSAWPPPGPIPAGHWEAGPKG). The helical transmembrane segment at 710–730 (KVAALGLATGIVLVLLLLCLY) threads the bilayer. Residues 731–1279 (RVLCPRNYGQ…YVPSVLEKLD (549 aa)) are Cytoplasmic-facing. Residues 731-1279 (RVLCPRNYGQ…YVPSVLEKLD (549 aa)) form an interaction with SREBF2 region. The stretch at 771–811 (VLRGHLMDIECLASDGMLLVSCCLAGHVCVWDAQTGDCLTR) is one WD 1 repeat. Residues 811-904 (RIPRPGRQRR…PRHRAVCGRS (94 aa)) are disordered. Phosphoserine occurs at positions 822, 838, and 851. Residues 877-891 (IDTNFSAQPRSSQPT) are compositionally biased toward polar residues. Serine 907 and serine 937 each carry phosphoserine. Residues 931-962 (PALRPPSPGPVLSQAPEDEGGSPEKGSPSLAW) form a disordered region. 2 WD repeats span residues 952-1002 (SPEK…LCCS) and 1005-1042 (EVSS…ALSP). An Omega-N-methylarginine modification is found at arginine 1051. 4 WD repeats span residues 1077 to 1114 (AHQK…CLFT), 1117 to 1155 (GHSG…RVSH), 1158 to 1195 (AHRG…KFYS), and 1197 to 1235 (QQDL…LLQT).

The protein belongs to the WD repeat SCAP family. As to quaternary structure, membrane region forms a homotetramer. Component of the SCAP-SREBP complex (composed of SCAP and SREBF1/SREBP1 or SREBF2/SREBP2); interacts with SREBF1/SREBP1 or SREBF2/SREBP2 through its C-terminal cytoplasmic domain. Forms a ternary complex with INSIG1 or INSIG2 through its transmembrane domains at high sterol concentrations. Interacts with PAQR3; the interaction anchors the SCAP-SREBP complex to the Golgi apparatus in low cholesterol conditions. Interacts with the SEC23-SEC24 complex in a SAR1-GTP-dependent manner through an ER export signal in its third cytoplasmic loop. Interacts with RNF139; the interaction inhibits the interaction of SCAP with SEC24B and hampering the ER to Golgi transport of the SCAP-SREBP complex. Interacts with SPRING1. Post-translationally, ubiquitinated at Lys-454 and Lys-466. RNF145 triggers ubiquitination of SCAP, likely inhibiting SCAP-SREBP complex transport to the Golgi apparatus and the subsequent processing/maturation of SREBF2/SREBP2.

It is found in the endoplasmic reticulum membrane. Its subcellular location is the golgi apparatus membrane. The protein resides in the cytoplasmic vesicle. It localises to the COPII-coated vesicle membrane. Escort protein required for cholesterol as well as lipid homeostasis. Regulates export of the SCAP-SREBP complex from the endoplasmic reticulum to the Golgi upon low cholesterol, thereby regulating the processing of sterol regulatory element-binding proteins (SREBPs) SREBF1/SREBP1 and SREBF2/SREBP2. At high sterol concentrations, formation of a ternary complex with INSIG (INSIG1 or INSIG2) leads to mask the ER export signal in SCAP, promoting retention of the complex in the endoplasmic reticulum. Low sterol concentrations trigger release of INSIG, a conformational change in the SSD domain of SCAP, unmasking of the ER export signal, promoting recruitment into COPII-coated vesicles and transport of the SCAP-SREBP to the Golgi: in the Golgi, SREBPs are then processed, releasing the transcription factor fragment of SREBPs from the membrane, its import into the nucleus and up-regulation of LDLR, INSIG1 and the mevalonate pathway. Binds cholesterol via its SSD domain. The protein is Sterol regulatory element-binding protein cleavage-activating protein of Homo sapiens (Human).